We begin with the raw amino-acid sequence, 339 residues long: Sulfate/thiosulfate import ATP-binding protein CysA (339 aa).

An ABC transporter domain is found at 3 to 237 (IAIRSVEKQF…PETAFVCGFV (235 aa)). Residue 35 to 42 (GPSGSGKT) coordinates ATP.

The protein belongs to the ABC transporter superfamily. Sulfate/tungstate importer (TC 3.A.1.6) family. The complex is composed of two ATP-binding proteins (CysA), two transmembrane proteins (CysT and CysW) and a solute-binding protein (CysP).

Its subcellular location is the cell inner membrane. The enzyme catalyses sulfate(out) + ATP + H2O = sulfate(in) + ADP + phosphate + H(+). It catalyses the reaction thiosulfate(out) + ATP + H2O = thiosulfate(in) + ADP + phosphate + H(+). Part of the ABC transporter complex CysAWTP involved in sulfate/thiosulfate import. Responsible for energy coupling to the transport system. The sequence is that of Sulfate/thiosulfate import ATP-binding protein CysA from Caulobacter vibrioides (strain ATCC 19089 / CIP 103742 / CB 15) (Caulobacter crescentus).